Reading from the N-terminus, the 297-residue chain is D-alanine--D-alanine ligase (297 aa).

Residues 95-294 (KMLWKAFGLP…FEQLVVKILE (200 aa)) enclose the ATP-grasp domain. 125–180 (VAKLGLPLMVKPSLEGSSVGLTKVKAVEELKSAVEYALKFDNTILIEEWLAGDELT) provides a ligand contact to ATP. 3 residues coordinate Mg(2+): D248, E261, and N263.

This sequence belongs to the D-alanine--D-alanine ligase family. The cofactor is Mg(2+). Mn(2+) serves as cofactor.

The protein resides in the cytoplasm. The catalysed reaction is 2 D-alanine + ATP = D-alanyl-D-alanine + ADP + phosphate + H(+). It functions in the pathway cell wall biogenesis; peptidoglycan biosynthesis. In terms of biological role, cell wall formation. The polypeptide is D-alanine--D-alanine ligase (Haemophilus influenzae (strain PittEE)).